Reading from the N-terminus, the 282-residue chain is Secretory carrier-associated membrane protein 3 (282 aa).

The segment at 1-36 is disordered; the sequence is MAGKHGRNGFEDDDVNPFAGGSVPPANNSRLPPLSH. Topologically, residues 1 to 117 are cytoplasmic; sequence MAGKHGRNGF…EIPIHLQRMQ (117 aa). A coiled-coil region spans residues 48-92; the sequence is LDSSKDLKKKEKELQAMEAELNKRERELKRKEEAAAQAGIVIEDK. 4 helical membrane-spanning segments follow: residues 118 to 138, 148 to 168, 185 to 205, and 230 to 250; these read YLAF…IIAT, VIIW…AYVL, FGWF…AAVA, and IVGI…LLSI. Residues 251-282 lie on the Cytoplasmic side of the membrane; the sequence is GVIQQVYMYFRGSGKAAEMKREAARGALSSAF.

It belongs to the SCAMP family.

The protein localises to the cell membrane. Its subcellular location is the cytoplasmic vesicle. It localises to the secretory vesicle membrane. Probably involved in membrane trafficking. This Oryza sativa subsp. japonica (Rice) protein is Secretory carrier-associated membrane protein 3 (SCAMP3).